The following is a 714-amino-acid chain: MEMASAFTLNVRLDNIAVITIDVPGEKMNTLKAEFASQVRAIIKQLRENKELRGVVFVSAKPDNFIAGADINMIGNCKTAQEAEALARQGQQLMAEIHALPVPVIAAIHGACLGGGLELALACHGRMCTDDPKTVLGLPEVQLGLLPGSGGTQRLPRLIGVSTALEMILTGKQLRAKQALKLGLVDDVVPQSILLEAAVELAKQDRPSSRPLPVRERILAGPLGRALLFKMVGKKTEHKTQGNYPATERILEVVETGLAQGTSSGYDAEARAFGELAMTPQSQALRSIFFASTEVKKDPGSDAPPAPLNSVGILGGGLMGGGIAYVTACKAGLPVRIKDINPQGINHALKYSWDQLEGKVRRRHLKASERDRQLALISGTTDYRGFAHRDLIIEAVFENLELKQQMVAEVEQNCAAHTIFASNTSSLPIGDIAAHATRPEQVIGLHFFSPVEKMPLVEIIPHAGTSAQTIATTVKLAKKQGKTPIVVRDKAGFYVNRILAPYINEAIRMLTEGERVEHIDAALVKFGFPVGPIQLLDEVGIDTGTKIIPVLEAAYGERFSAPANVVSSILNDDRKGRKNGRGFYLYGQKGRKSKKQVDPAIYPLIGTQGQGRLSAPQVAERCVMLMLNEAVRCLDEQVIRSVRDGDIGAVFGIGFPPFLGGPFRYIDSLGAGEVVAIMQRLATQYGSRFTPCERLVEMSKRGESFWKTTATDLQ.

An enoyl-CoA hydratase region spans residues 1–190; the sequence is MEMASAFTLN…KLGLVDDVVP (190 aa). The 3-hydroxyacyl-CoA dehydrogenase stretch occupies residues 306–714; that stretch reads APLNSVGILG…FWKTTATDLQ (409 aa).

This sequence in the N-terminal section; belongs to the enoyl-CoA hydratase/isomerase family. In the central section; belongs to the 3-hydroxyacyl-CoA dehydrogenase family. Heterotetramer of two alpha chains (FadJ) and two beta chains (FadI).

The protein localises to the cytoplasm. It catalyses the reaction a (3S)-3-hydroxyacyl-CoA = a (2E)-enoyl-CoA + H2O. The enzyme catalyses a 4-saturated-(3S)-3-hydroxyacyl-CoA = a (3E)-enoyl-CoA + H2O. It carries out the reaction a (3S)-3-hydroxyacyl-CoA + NAD(+) = a 3-oxoacyl-CoA + NADH + H(+). The catalysed reaction is (3S)-3-hydroxybutanoyl-CoA = (3R)-3-hydroxybutanoyl-CoA. The protein operates within lipid metabolism; fatty acid beta-oxidation. Catalyzes the formation of a hydroxyacyl-CoA by addition of water on enoyl-CoA. Also exhibits 3-hydroxyacyl-CoA epimerase and 3-hydroxyacyl-CoA dehydrogenase activities. The protein is Fatty acid oxidation complex subunit alpha of Escherichia coli O17:K52:H18 (strain UMN026 / ExPEC).